Consider the following 243-residue polypeptide: 2-C-methyl-D-erythritol 4-phosphate cytidylyltransferase (243 aa).

Belongs to the IspD/TarI cytidylyltransferase family. IspD subfamily. In terms of assembly, homodimer.

It carries out the reaction 2-C-methyl-D-erythritol 4-phosphate + CTP + H(+) = 4-CDP-2-C-methyl-D-erythritol + diphosphate. It participates in isoprenoid biosynthesis; isopentenyl diphosphate biosynthesis via DXP pathway; isopentenyl diphosphate from 1-deoxy-D-xylulose 5-phosphate: step 2/6. Its function is as follows. Catalyzes the formation of 4-diphosphocytidyl-2-C-methyl-D-erythritol from CTP and 2-C-methyl-D-erythritol 4-phosphate (MEP). This Photorhabdus laumondii subsp. laumondii (strain DSM 15139 / CIP 105565 / TT01) (Photorhabdus luminescens subsp. laumondii) protein is 2-C-methyl-D-erythritol 4-phosphate cytidylyltransferase.